The primary structure comprises 461 residues: Homogentisate 1,2-dioxygenase (461 aa).

The Fe cation site is built by His-341, Glu-347, and His-377.

Belongs to the homogentisate dioxygenase family. The cofactor is Fe cation.

The catalysed reaction is homogentisate + O2 = 4-maleylacetoacetate + H(+). The protein operates within amino-acid degradation; L-phenylalanine degradation; acetoacetate and fumarate from L-phenylalanine: step 4/6. The sequence is that of Homogentisate 1,2-dioxygenase (HGO) from Arabidopsis thaliana (Mouse-ear cress).